A 349-amino-acid chain; its full sequence is C-X-C chemokine receptor type 1 (349 aa).

Residues 1–44 (MAEAEYFIWIAPEGDFEEEFGNITRMLPTGEYFSPCKRVPMTNR) lie on the Extracellular side of the membrane. Residue Asn22 is glycosylated (N-linked (GlcNAc...) asparagine). A helical transmembrane segment spans residues 45–71 (QAVVVFYALVFLLSLLGNSLVMLVILY). At 72 to 80 (RRRTRSVTD) the chain is on the cytoplasmic side. The chain crosses the membrane as a helical span at residues 81 to 101 (VYVLNLAIADLLFSLTLPFLA). The Extracellular segment spans residues 102-116 (VSKWKGWIFGTPLCK). Cys115 and Cys192 are oxidised to a cystine. Residues 117 to 138 (MVSLLKEVNFFSGILLLACISV) traverse the membrane as a helical segment. Residues 139-159 (DRYLAIVHATRTLTRKRYLVK) are Cytoplasmic-facing. The chain crosses the membrane as a helical span at residues 160–179 (FVCMGTWGLSLVLSLPFAIF). The Extracellular portion of the chain corresponds to 180 to 204 (RQAYKPYRSGTVCYEVLGEATADLR). Residues 205–225 (ITLRGLSHIFGFLLPLFIMLV) form a helical membrane-spanning segment. At 226–247 (CYGLTLRTLFKAHMRQKRRAMW) the chain is on the cytoplasmic side. Residues 248–269 (VIFAVVLVFLLCCLPYNLVLLS) traverse the membrane as a helical segment. Over 270 to 290 (DTLLGAHLIQDTCERRNNIDQ) the chain is Extracellular. A helical membrane pass occupies residues 291–313 (ALYITEILGFSHSCLNPVIYAFV). The Cytoplasmic segment spans residues 314-349 (GQSFRHEFLKILANLVHKEVLTHHSASFRTSLTTIY).

This sequence belongs to the G-protein coupled receptor 1 family. In terms of assembly, interacts with IL8. Interacts with GNAI2.

It localises to the cell membrane. Its function is as follows. Receptor to interleukin-8, which is a powerful neutrophils chemotactic factor. Binding of IL-8 to the receptor causes activation of neutrophils. This response is mediated via a G-protein that activates a phosphatidylinositol-calcium second messenger system. The protein is C-X-C chemokine receptor type 1 (Cxcr1) of Rattus norvegicus (Rat).